We begin with the raw amino-acid sequence, 153 residues long: Ribonuclease H (153 aa).

The 142-residue stretch at 4-145 folds into the RNase H type-1 domain; the sequence is SVDSVELFTD…ADQLANRGVD (142 aa). Aspartate 13, glutamate 51, aspartate 73, and aspartate 137 together coordinate Mg(2+).

This sequence belongs to the RNase H family. As to quaternary structure, monomer. The cofactor is Mg(2+).

The protein resides in the cytoplasm. It catalyses the reaction Endonucleolytic cleavage to 5'-phosphomonoester.. Endonuclease that specifically degrades the RNA of RNA-DNA hybrids. The chain is Ribonuclease H from Pseudomonas fluorescens (strain Pf0-1).